Here is a 450-residue protein sequence, read N- to C-terminus: Sensor histidine kinase EnvZ (450 aa).

The Cytoplasmic segment spans residues 1 to 15; the sequence is MRRMRFSPRSSFART. Residues 16-35 form a helical membrane-spanning segment; that stretch reads LLLIVTLLFVSLVTTYLVVL. Residues 36–158 are Periplasmic-facing; sequence NFAILPSLQQ…LTEIHQGDFS (123 aa). A helical membrane pass occupies residues 159-179; the sequence is PLFRYTLAIMLLAIGGAWLFI. The 53-residue stretch at 180–232 folds into the HAMP domain; that stretch reads RIQNRPLVDLEHAALQVGKGIIPPPLREYGASEVRSVTRAFNHMAAGVKQLAD. The Cytoplasmic segment spans residues 180–450; sequence RIQNRPLVDL…ARVQGTTKEA (271 aa). The tract at residues 223 to 289 is cytoplasmic dimerization domain (CDD), when dimerized forms osmosensitive core; the sequence is MAAGVKQLAD…IIEQFIDYLR (67 aa). The 201-residue stretch at 240–440 folds into the Histidine kinase domain; that stretch reads GVSHDLRTPL…SIRAWLPVPV (201 aa). ATP contacts are provided by residues His243, 347–351, Asp373, 392–393, and 402–406; these read NAARY, RG, and TGLGL. His243 is subject to Phosphohistidine; by autocatalysis.

As to quaternary structure, homodimer. In terms of processing, autophosphorylated.

The protein resides in the cell inner membrane. The enzyme catalyses ATP + protein L-histidine = ADP + protein N-phospho-L-histidine.. Member of the two-component regulatory system EnvZ/OmpR involved in regulating expression of the outer membrane porins OmpC and OmpF as well as other genes. Unlike E.coli or S.typhimurium both porins are expressed constitutively. Involved in regulation of the biosynthesis of Vi polysaccharide, a capsular antigen thought to be involved in the virulence of S.typhi. Vi antigen is synthesized at low NaCl concentrations (under 0.4 M). EnvZ functions as a membrane-associated protein kinase that phosphorylates OmpR in response to environmental signals. This is Sensor histidine kinase EnvZ (envZ) from Salmonella typhi.